Consider the following 528-residue polypeptide: Cytochrome P450 1A5 (528 aa).

C467 contacts heme.

This sequence belongs to the cytochrome P450 family. It depends on heme as a cofactor.

The protein resides in the endoplasmic reticulum membrane. Its subcellular location is the microsome membrane. It catalyses the reaction an organic molecule + reduced [NADPH--hemoprotein reductase] + O2 = an alcohol + oxidized [NADPH--hemoprotein reductase] + H2O + H(+). In terms of biological role, cytochromes P450 are a group of heme-thiolate monooxygenases. In liver microsomes, this enzyme is involved in an NADPH-dependent electron transport pathway. It oxidizes a variety of structurally unrelated compounds, including steroids, fatty acids, and xenobiotics. The chain is Cytochrome P450 1A5 (CYP1A5) from Gallus gallus (Chicken).